Here is a 938-residue protein sequence, read N- to C-terminus: Glutamate receptor ionotropic, NMDA 1 (938 aa).

The N-terminal stretch at 1–18 is a signal peptide; that stretch reads MSTMRLLTLALLFSCSVA. Topologically, residues 19–559 are extracellular; sequence RAACDPKIVN…TLDSFMQPFQ (541 aa). Asparagine 61, asparagine 203, asparagine 239, asparagine 276, asparagine 300, asparagine 350, asparagine 368, asparagine 440, asparagine 471, and asparagine 491 each carry an N-linked (GlcNAc...) asparagine glycan. Cysteine 79 and cysteine 308 are disulfide-bonded. 2 disulfide bridges follow: cysteine 420–cysteine 454 and cysteine 436–cysteine 455. Residues proline 516, threonine 518, and arginine 523 each coordinate glycine. The chain crosses the membrane as a helical span at residues 560 to 580; that stretch reads STLWLLVGLSVHVVAVMLYLL. Topologically, residues 581-604 are cytoplasmic; the sequence is DRFSPFGRFKVNSEEEEEDALTLS. The segment at 603–624 is pore-forming; sequence LSSAMWFSWGVLLNSGIGEGAP. The segment at residues 605–615 is an intramembrane region (discontinuously helical); it reads SAMWFSWGVLL. The Cytoplasmic portion of the chain corresponds to 616–627; sequence NSGIGEGAPRSF. The helical transmembrane segment at 628-648 threads the bilayer; sequence SARILGMVWAGFAMIIVASYT. Over 649–811 the chain is Extracellular; sequence ANLAAFLVLD…SNAPATLTFE (163 aa). An N-linked (GlcNAc...) asparagine glycan is attached at asparagine 674. 2 residues coordinate glycine: serine 688 and aspartate 732. Cysteine 744 and cysteine 798 are oxidised to a cystine. N-linked (GlcNAc...) asparagine glycosylation occurs at asparagine 771. A helical transmembrane segment spans residues 812 to 835; sequence NMAGVFMLVAGGIVAGIFLIFIEI. The Cytoplasmic segment spans residues 836 to 938; that stretch reads AYKRHKDARR…LQLCSRHRES (103 aa). Phosphoserine; by PKC occurs at positions 889, 890, 896, and 897. Residues 889–938 form a disordered region; the sequence is SSFKRRRSSKDTSTGGGRGALQNQKDTVLPRRAIEREEGQLQLCSRHRES. Residues 916-927 show a composition bias toward basic and acidic residues; sequence VLPRRAIEREEG.

The protein belongs to the glutamate-gated ion channel (TC 1.A.10.1) family. NR1/GRIN1 subfamily. As to quaternary structure, heterotetramer; the NMDAR subunits are modular and harbor tiered domains that function in concert to regulate opening and closing of the cation-selective ion channel pore. Forms heterotetrameric channels composed of two GluN1/zeta subunits (GRIN1), and two identical GluN2/epsilon subunits (GRIN2A, GRIN2B, GRIN2C or GRIN2D) or GluN3 subunits (GRIN3A or GRIN3B) (in vitro). Can also form heterotetrameric channels that contain at least two GluN1 subunits and at least two different GluN2 subunits (or a combination of one GluN2 and one GluN3 subunits) (in vitro). In vivo, the subunit composition may vary in function of the expression levels of the different subunits. Found in a complex with GRIN2A or GRIN2B, GRIN3A and PPP2CB. Found in a complex with GRIN2A or GRIN2B and GRIN3B. Interacts with SNX27 (via PDZ domain); the interaction is required for recycling to the plasma membrane when endocytosed and prevent degradation in lysosomes. Interacts with DLG4 and MPDZ. Interacts with LRFN1 and LRFN2. Interacts with MYZAP. Found in a complex with DLG4 and PRR7. Found in a complex with GRIN2B and PRR7. Interacts with PRR7; the interaction is reduced following NMDA receptor activity. NMDA is probably regulated by C-terminal phosphorylation of an isoform of GRIN1 by PKC. Dephosphorylated on Ser-897 probably by protein phosphatase 2A (PPP2CB). Its phosphorylated state is influenced by the formation of the NMDAR-PPP2CB complex and the NMDAR channel activity.

The protein resides in the cell membrane. It is found in the postsynaptic cell membrane. It localises to the postsynaptic density membrane. Its subcellular location is the synaptic cell membrane. It catalyses the reaction Ca(2+)(in) = Ca(2+)(out). The catalysed reaction is Na(+)(in) = Na(+)(out). The enzyme catalyses K(+)(in) = K(+)(out). With respect to regulation, NMDA glutamate receptor activity is inhbited by Mg2(+) in a voltage-dependent manner; Mg2(+)-induced blockade occurs only at negative potentials and decreases with membrane depolarization. 7-chlorokynurenate (50 uM) or Zn2(+) (100 uM) partially inhibit the NMDA glutamate receptor activity, while acide 2-amino-5-phosphonovalerique(100 uM) almost completely blocked the NMDA glutamate receptor activity. Dizocilpine (1 uM) results in long lasting and almost complete block of the NMDA glutamate receptor activity. Its function is as follows. Component of N-methyl-D-aspartate (NMDA) receptors (NMDARs) that function as heterotetrameric, ligand-gated cation channels with high calcium permeability and voltage-dependent block by Mg(2+). NMDARs participate in synaptic plasticity for learning and memory formation by contributing to the long-term potentiation (LTP). Channel activation requires binding of the neurotransmitter L-glutamate to the GluN2 subunit, glycine or D-serine binding to the GluN1 subunit, plus membrane depolarization to eliminate channel inhibition by Mg(2+). NMDARs mediate simultaneously the potasium efflux and the influx of calcium and sodium. Each GluN2 or GluN3 subunit confers differential attributes to channel properties, including activation, deactivation and desensitization kinetics, pH sensitivity, Ca2(+) permeability, and binding to allosteric modulators. The chain is Glutamate receptor ionotropic, NMDA 1 from Homo sapiens (Human).